The sequence spans 414 residues: MCRGDSPGVAGGSGEHCLGGDDGDDGRPRLACVGAIARGFAHLWLQAATLGFVGSVVLSRGPYADAMSGAFVIGSTGLGFLRAPPAFARPPTRVCAWLRLVGGGAAVALWSLGEAGAPPGVPGPATQCLALGAAYAALLVLADDVHPLFLLAPRPLFVGTLGVVVGGLTIGGSARYWWIDPRAAAALTAAVVAGLGTTAAGDSFSKACPRHRRFCVVSAVESPPPRYAPEDAERPTDHGPLLPSTHHQRSPRVCGDGAARPENIWVPVVTFAGALALAACAARGSDAAPSGPVLPLWPQVFVGGHAAAGLTELCQTLAPRDLTDPLLFAYVGFQVVNHGLMFVVPDIAVYAMLGGAVWISLTQVLGLRRRLHKDPDAGPWAAATLRGLFFSVYALGFAAGVLVRPRMAASRRSG.

Helical transmembrane passes span 39 to 59 (GFAHLWLQAATLGFVGSVVLS), 61 to 81 (GPYADAMSGAFVIGSTGLGFL), 96 to 116 (AWLRLVGGGAAVALWSLGEAG), 121 to 141 (VPGPATQCLALGAAYAALLVL), 148 to 168 (LFLLAPRPLFVGTLGVVVGGL), and 184 to 204 (AAALTAAVVAGLGTTAAGDSF). Positions 225–253 (PRYAPEDAERPTDHGPLLPSTHHQRSPRV) are disordered. Basic and acidic residues predominate over residues 228-237 (APEDAERPTD). The next 2 membrane-spanning stretches (helical) occupy residues 339-359 (GLMFVVPDIAVYAMLGGAVWI) and 383-403 (ATLRGLFFSVYALGFAAGVLV).

This sequence belongs to the alphaherpesvirinae HHV-1 UL43 family.

The protein resides in the membrane. This is Membrane protein UL43 from Homo sapiens (Human).